The sequence spans 172 residues: Zinc finger C2HC domain-containing protein 1B (172 aa).

C2HC/C3H-type zinc fingers lie at residues 14-43 (KLFP…VFNK) and 117-146 (DYIQ…QTSR). C18, C21, H33, C37, C121, C124, H136, and C140 together coordinate Zn(2+).

Belongs to the ZC2HC1 family. Zn(2+) is required as a cofactor.

The chain is Zinc finger C2HC domain-containing protein 1B (Zc2hc1b) from Mus musculus (Mouse).